We begin with the raw amino-acid sequence, 270 residues long: Elongation factor Ts (270 aa).

The segment at Thr81–Val84 is involved in Mg(2+) ion dislocation from EF-Tu.

This sequence belongs to the EF-Ts family.

The protein localises to the cytoplasm. Its function is as follows. Associates with the EF-Tu.GDP complex and induces the exchange of GDP to GTP. It remains bound to the aminoacyl-tRNA.EF-Tu.GTP complex up to the GTP hydrolysis stage on the ribosome. The sequence is that of Elongation factor Ts from Wigglesworthia glossinidia brevipalpis.